The primary structure comprises 122 residues: Large ribosomal subunit protein uL14 (122 aa).

The protein belongs to the universal ribosomal protein uL14 family. In terms of assembly, part of the 50S ribosomal subunit. Forms a cluster with proteins L3 and L19. In the 70S ribosome, L14 and L19 interact and together make contacts with the 16S rRNA in bridges B5 and B8.

In terms of biological role, binds to 23S rRNA. Forms part of two intersubunit bridges in the 70S ribosome. The polypeptide is Large ribosomal subunit protein uL14 (Chlamydia pneumoniae (Chlamydophila pneumoniae)).